The sequence spans 261 residues: MGVADNEYISVPTGEPVQQQPQTTSVVFGAPQSYYPHQQPQIILSAPTTTASTSTTDSTVVEENPVCCDRCDLENKVKYQRYSTVGPWLYQIIILFFSQQFLLFSIAPILGLFAMYTQNRCIVVMHFLTAAFYYIFSVIFLFSGDQINTILLSILFSIIFTLSLMNYSRYIKTLNKLANVGECLQSTINGSGFEVTIESQPTPTTIPQPIVQPQPIYVSQLPMMIPQPSSQPPQIIVPQIVYDANHNPIYHLIPIQNSNQH.

A disordered region spans residues 1-22 (MGVADNEYISVPTGEPVQQQPQ). The next 3 helical transmembrane spans lie at 92–112 (IIIL…ILGL), 122–142 (IVVM…IFLF), and 147–167 (INTI…LMNY).

It is found in the membrane. This is an uncharacterized protein from Dictyostelium discoideum (Social amoeba).